The sequence spans 414 residues: TAR DNA-binding protein 43 (414 aa).

RRM domains lie at 104–200 and 191–262; these read SDLI…RCTE and RKVF…NAEP. Over residues 261 to 274 the composition is skewed to basic and acidic residues; it reads EPKHNSNRQLERGG. Disordered stretches follow at residues 261–303 and 341–373; these read EPKH…GNNQ and ASQQNQSGPSGNNQPQGNMQREQNQGFSSGNNS. The span at 275–303 shows a compositional bias: gly residues; sequence RFGGNPGGFGNQGGFGNSRGGGGGLGNNQ. Residues 342-373 are compositionally biased toward low complexity; the sequence is SQQNQSGPSGNNQPQGNMQREQNQGFSSGNNS.

In terms of assembly, homodimer.

The protein resides in the nucleus. It is found in the cytoplasm. Its subcellular location is the stress granule. It localises to the mitochondrion. In terms of biological role, probably involved in transcriptional repression. May play a role in the maintenance of the circadian clock periodicity. The polypeptide is TAR DNA-binding protein 43 (TARDBP) (Gallus gallus (Chicken)).